The following is a 92-amino-acid chain: MEVLPLVSGICCILGGIGVILHTNPINKIIMLALLEIGMIGLIVSCYYLDIAIVSSLCEPICTVILLLGYLKYLTTVKKKKRYGRNLPILSK.

Helical transmembrane passes span 1–21, 29–49, and 51–71; these read MEVL…GVIL, IIML…CYYL, and IAIV…LGYL.

The protein resides in the cell membrane. This is an uncharacterized protein from Methanocaldococcus jannaschii (strain ATCC 43067 / DSM 2661 / JAL-1 / JCM 10045 / NBRC 100440) (Methanococcus jannaschii).